Consider the following 419-residue polypeptide: Ribosomal RNA large subunit methyltransferase G (419 aa).

Residues 386-408 (KAEPFETHPTEAEAKVEVTESKP) are compositionally biased toward basic and acidic residues. The interval 386–419 (KAEPFETHPTEAEAKVEVTESKPHPQSSLYGTKK) is disordered. Polar residues predominate over residues 409–419 (HPQSSLYGTKK).

This sequence belongs to the methyltransferase superfamily. RlmG family.

It is found in the cytoplasm. The enzyme catalyses guanosine(1835) in 23S rRNA + S-adenosyl-L-methionine = N(2)-methylguanosine(1835) in 23S rRNA + S-adenosyl-L-homocysteine + H(+). In terms of biological role, specifically methylates the guanine in position 1835 (m2G1835) of 23S rRNA. This is Ribosomal RNA large subunit methyltransferase G from Shewanella woodyi (strain ATCC 51908 / MS32).